Here is a 630-residue protein sequence, read N- to C-terminus: Chaperone protein DnaK (630 aa).

A Phosphothreonine; by autocatalysis modification is found at Thr198. The tract at residues 604–630 (AAAAPGEEAPKDDDVVDAEFSEVDDKK) is disordered. Residues 617-630 (DVVDAEFSEVDDKK) show a composition bias toward acidic residues.

This sequence belongs to the heat shock protein 70 family.

Its function is as follows. Acts as a chaperone. This chain is Chaperone protein DnaK, found in Rhizorhabdus wittichii (strain DSM 6014 / CCUG 31198 / JCM 15750 / NBRC 105917 / EY 4224 / RW1) (Sphingomonas wittichii).